A 468-amino-acid chain; its full sequence is Cysteine--tRNA ligase (468 aa).

Zn(2+) is bound at residue Cys28. Residues Pro30–Asn40 carry the 'HIGH' region motif. Zn(2+) contacts are provided by Cys212, His237, and Glu241. A 'KMSKS' region motif is present at residues Lys271–Ser275. An ATP-binding site is contributed by Lys274.

It belongs to the class-I aminoacyl-tRNA synthetase family. Monomer. The cofactor is Zn(2+).

It localises to the cytoplasm. The enzyme catalyses tRNA(Cys) + L-cysteine + ATP = L-cysteinyl-tRNA(Cys) + AMP + diphosphate. The sequence is that of Cysteine--tRNA ligase from Lacticaseibacillus casei (strain BL23) (Lactobacillus casei).